The chain runs to 596 residues: NADH-quinone oxidoreductase subunit C/D (596 aa).

Residues 1–186 (MMNDNKYIHI…PAFTLTRKKE (186 aa)) are NADH dehydrogenase I subunit C. The interval 210-596 (DFMFLNLGPN…IDFVMSDVDR (387 aa)) is NADH dehydrogenase I subunit D.

In the N-terminal section; belongs to the complex I 30 kDa subunit family. The protein in the C-terminal section; belongs to the complex I 49 kDa subunit family. As to quaternary structure, NDH-1 is composed of 13 different subunits. Subunits NuoB, CD, E, F, and G constitute the peripheral sector of the complex.

Its subcellular location is the cell inner membrane. The enzyme catalyses a quinone + NADH + 5 H(+)(in) = a quinol + NAD(+) + 4 H(+)(out). NDH-1 shuttles electrons from NADH, via FMN and iron-sulfur (Fe-S) centers, to quinones in the respiratory chain. The immediate electron acceptor for the enzyme in this species is believed to be ubiquinone. Couples the redox reaction to proton translocation (for every two electrons transferred, four hydrogen ions are translocated across the cytoplasmic membrane), and thus conserves the redox energy in a proton gradient. This chain is NADH-quinone oxidoreductase subunit C/D, found in Blochmanniella floridana.